The chain runs to 76 residues: Transcription modulator YdgT (76 aa).

This sequence belongs to the Hha/YmoA/Cnu family.

Its function is as follows. Binds to H-NS and modifies the range of genes it silences; H-NS alone silences 'core' genes while the H-NS-Hha complex (and presumably also H-NS-YdgT) silences genes acquired by horizontal gene transfer. Plays a role silencing virulence factors in the absence of factors that induce pathogenicity. In Salmonella typhimurium (strain SL1344), this protein is Transcription modulator YdgT (ydgT).